We begin with the raw amino-acid sequence, 556 residues long: Formate--tetrahydrofolate ligase (556 aa).

65–72 (TPAGEGKS) lines the ATP pocket.

This sequence belongs to the formate--tetrahydrofolate ligase family.

It catalyses the reaction (6S)-5,6,7,8-tetrahydrofolate + formate + ATP = (6R)-10-formyltetrahydrofolate + ADP + phosphate. The protein operates within one-carbon metabolism; tetrahydrofolate interconversion. The chain is Formate--tetrahydrofolate ligase from Streptococcus thermophilus (strain ATCC BAA-491 / LMD-9).